Consider the following 370-residue polypeptide: tRNA 2-selenouridine synthase (370 aa).

Positions 12-136 (FLDDVPMMDM…MRTFLLETTQ (125 aa)) constitute a Rhodanese domain. The active-site S-selanylcysteine intermediate is the Cys-95.

It belongs to the SelU family. As to quaternary structure, monomer.

The enzyme catalyses 5-methylaminomethyl-2-thiouridine(34) in tRNA + selenophosphate + (2E)-geranyl diphosphate + H2O + H(+) = 5-methylaminomethyl-2-selenouridine(34) in tRNA + (2E)-thiogeraniol + phosphate + diphosphate. It carries out the reaction 5-methylaminomethyl-2-thiouridine(34) in tRNA + (2E)-geranyl diphosphate = 5-methylaminomethyl-S-(2E)-geranyl-thiouridine(34) in tRNA + diphosphate. The catalysed reaction is 5-methylaminomethyl-S-(2E)-geranyl-thiouridine(34) in tRNA + selenophosphate + H(+) = 5-methylaminomethyl-2-(Se-phospho)selenouridine(34) in tRNA + (2E)-thiogeraniol. It catalyses the reaction 5-methylaminomethyl-2-(Se-phospho)selenouridine(34) in tRNA + H2O = 5-methylaminomethyl-2-selenouridine(34) in tRNA + phosphate. In terms of biological role, involved in the post-transcriptional modification of the uridine at the wobble position (U34) of tRNA(Lys), tRNA(Glu) and tRNA(Gln). Catalyzes the conversion of 2-thiouridine (S2U-RNA) to 2-selenouridine (Se2U-RNA). Acts in a two-step process involving geranylation of 2-thiouridine (S2U) to S-geranyl-2-thiouridine (geS2U) and subsequent selenation of the latter derivative to 2-selenouridine (Se2U) in the tRNA chain. The polypeptide is tRNA 2-selenouridine synthase (Pseudomonas putida (strain GB-1)).